Consider the following 132-residue polypeptide: Small ribosomal subunit protein uS12 (132 aa).

D89 bears the 3-methylthioaspartic acid mark. Residues 102–132 (LDTSGVADRKQSRSKYGAKVPKAGAAPAKKK) form a disordered region. Residues 118–132 (GAKVPKAGAAPAKKK) are compositionally biased toward low complexity.

The protein belongs to the universal ribosomal protein uS12 family. In terms of assembly, part of the 30S ribosomal subunit. Contacts proteins S8 and S17. May interact with IF1 in the 30S initiation complex.

Its function is as follows. With S4 and S5 plays an important role in translational accuracy. In terms of biological role, interacts with and stabilizes bases of the 16S rRNA that are involved in tRNA selection in the A site and with the mRNA backbone. Located at the interface of the 30S and 50S subunits, it traverses the body of the 30S subunit contacting proteins on the other side and probably holding the rRNA structure together. The combined cluster of proteins S8, S12 and S17 appears to hold together the shoulder and platform of the 30S subunit. The polypeptide is Small ribosomal subunit protein uS12 (Chlorobaculum tepidum (strain ATCC 49652 / DSM 12025 / NBRC 103806 / TLS) (Chlorobium tepidum)).